Here is a 514-residue protein sequence, read N- to C-terminus: MTAKRKPTALLILDGWGYREGKDSNAIANANTPFWDQISSQNPHVLIHTSGMAVGLPEGQMGNSEVGHMNLGAGRIVYQNFTRITKDIEDGVFAQNPAISSAIDKAVSNGKAVHLLGLLSPGGVHSHEDHILAACKVARERGADKVFVHAFLDGRDTPPRSAQPSLERTDKLLKELGCGRVASIIGRYYAMDRDNRWDRVQAAYDLLTLGEAPYHAESAVQALTAAYERGEDDEFVKATLIKGSSDNDAVISDGDAVIFMNFRADRARELTRCFVEQDFDGFQRNKLPKLADFVMLTEYSANIHTACAYPATELTNSIGEYMATLHKTQLRIAETEKYAHVTFFFSGGKEALFEGEERILIPSPDVATYDLKPEMSAPEVTDKLVEAIKSGKFDLIVCNYANGDMVGHSGVYDAAMKAAECIDQCLKRIAEALNEVGGQCLITADHGNAEQMVDENGQPHTQHTTGPVPLIYIGPKNISLKEDGRLCDIAPSLLDLMELEKPREMTGESLIVQN.

Mn(2+) is bound by residues D14 and S64. The active-site Phosphoserine intermediate is the S64. Residues H125, 155-156, R187, R193, 263-266, and K337 contribute to the substrate site; these read RD and RADR. Mn(2+) contacts are provided by D404, H408, D445, H446, and H463.

The protein belongs to the BPG-independent phosphoglycerate mutase family. As to quaternary structure, monomer. The cofactor is Mn(2+).

The catalysed reaction is (2R)-2-phosphoglycerate = (2R)-3-phosphoglycerate. It functions in the pathway carbohydrate degradation; glycolysis; pyruvate from D-glyceraldehyde 3-phosphate: step 3/5. Catalyzes the interconversion of 2-phosphoglycerate and 3-phosphoglycerate. This Hahella chejuensis (strain KCTC 2396) protein is 2,3-bisphosphoglycerate-independent phosphoglycerate mutase.